A 348-amino-acid polypeptide reads, in one-letter code: Rhodopsin (348 aa).

Methionine 1 bears the N-acetylmethionine mark. Residues 1–36 lie on the Extracellular side of the membrane; that stretch reads MNGTEGLNFYVPFSNKTGVVRSPFEYPQYYLAEPWQ. 2 N-linked (GlcNAc...) asparagine glycosylation sites follow: asparagine 2 and asparagine 15. A helical transmembrane segment spans residues 37–61; that stretch reads FSVLAAYMFLLIVLGFPINFLTLYV. Over 62–73 the chain is Cytoplasmic; the sequence is TVQHKKLRTPLN. A helical membrane pass occupies residues 74 to 96; that stretch reads YIPLNLAVANLFMVFGGFTTTLY. Over 97–110 the chain is Extracellular; it reads TSLHAYFVFGPTGC. An intrachain disulfide couples cysteine 110 to cysteine 187. Residues 111 to 133 form a helical membrane-spanning segment; that stretch reads NLEGFFATLGGEIALWSLVVLAI. A 'Ionic lock' involved in activated form stabilization motif is present at residues 134-136; sequence ERY. Over 134–152 the chain is Cytoplasmic; the sequence is ERYVVVCKPMSNFRFGENH. The helical transmembrane segment at 153–173 threads the bilayer; sequence AIMGLALTWVMAMACAAPPLV. The Extracellular portion of the chain corresponds to 174-202; it reads GWSRYIPEGMQCSCGIDYYTSRQEVNNES. Glutamate 201 lines the Zn(2+) pocket. A helical membrane pass occupies residues 203-224; it reads FVIYMFVVHFTIPLVIIFFCYG. At 225–252 the chain is on the cytoplasmic side; sequence QLVFTVKEAAAQQQESATTQKAEKEVTR. The helical transmembrane segment at 253 to 274 threads the bilayer; that stretch reads MVIIMVVAFLICWVPYASVAFY. Residues 275 to 286 are Extracellular-facing; that stretch reads IFTHQGSDFGPI. Residue glutamine 279 coordinates Zn(2+). The chain crosses the membrane as a helical span at residues 287–308; sequence FMTIPSFFAKSSSIYNPVIYIM. At lysine 296 the chain carries N6-(retinylidene)lysine. At 309–348 the chain is on the cytoplasmic side; it reads MNKQLRNCMLTTLCCGRNPLGDDEASTTASKTETSQVAPA. S-palmitoyl cysteine attachment occurs at residues cysteine 322 and cysteine 323. The tract at residues 330-348 is interaction with SAG; that stretch reads DDEASTTASKTETSQVAPA. Serine 334 carries the phosphoserine modification. 2 positions are modified to phosphothreonine: threonine 335 and threonine 336. Residue serine 338 is modified to Phosphoserine. Threonine 340 and threonine 342 each carry phosphothreonine. Position 343 is a phosphoserine (serine 343).

It belongs to the G-protein coupled receptor 1 family. Opsin subfamily. As to quaternary structure, homodimer. May form a complex composed of RHO, GRK1 and RCVRN in a Ca(2+)-dependent manner; RCVRN prevents the interaction between GRK1 and RHO. Interacts with GRK1. Interacts (phosphorylated form) with SAG. Interacts with GNAT1. Interacts with GNAT3. SAG and G-proteins compete for a common binding site. Interacts with PRCD; the interaction promotes PRCD stability. Forms a complex with ASAP1 and ARF4. Forms a complex with ASAP1, RAB11A, Rabin8/RAB3IP, ARF4 and RAB11FIP3; the complex regulates Golgi-to-cilia rhodopsin/RHO transport in photoreceptors. Post-translationally, phosphorylated on some or all of the serine and threonine residues present in the C-terminal region. In terms of processing, contains one covalently linked retinal chromophore. Upon light absorption, the covalently bound 11-cis-retinal is converted to all-trans-retinal. After hydrolysis of the Schiff base and release of the covalently bound all-trans-retinal, active rhodopsin is regenerated by binding of a fresh molecule of 11-cis-retinal.

The protein resides in the membrane. Its subcellular location is the cell projection. The protein localises to the cilium. It is found in the photoreceptor outer segment. In terms of biological role, photoreceptor required for image-forming vision at low light intensity. Required for photoreceptor cell viability after birth. Light-induced isomerization of 11-cis to all-trans retinal triggers a conformational change that activates signaling via G-proteins. Subsequent receptor phosphorylation mediates displacement of the bound G-protein alpha subunit by the arrestin SAG and terminates signaling. The protein is Rhodopsin (RHO) of Globicephala melas (Long-finned pilot whale).